The following is a 437-amino-acid chain: Carbonic anhydrase 9 (437 aa).

The signal sequence occupies residues 1–31; that stretch reads MASLGPSPWAPLSTPAPTAQLLLFLLLQVSA. The interval 32–95 is proteoglycan-like (PG); the sequence is QPQGLSGMQG…RMEESLGLED (64 aa). Residues 32–390 are Extracellular-facing; it reads QPQGLSGMQG…HVNSCFTAGD (359 aa). The segment at 34–118 is disordered; sequence QGLSGMQGEP…HGDEKGGGHS (85 aa). Over residues 50-79 the composition is skewed to acidic residues; it reads SGEDELGVDVLPSEEDAPEEADPPDGEDPP. Residues 96–390 are catalytic; the sequence is LSTPEAPEHS…HVNSCFTAGD (295 aa). The O-linked (GlcNAc...) threonine glycan is linked to Thr98. The Alpha-carbonic anhydrase domain occupies 118-369; sequence SHWSYGGTLL…LNGRTIEASF (252 aa). An intrachain disulfide couples Cys135 to Cys315. His179 functions as the Proton donor/acceptor in the catalytic mechanism. Zn(2+) is bound by residues His205, His207, and His230. Residue 311–312 coordinates substrate; the sequence is TT. Asn325 carries an N-linked (GlcNAc...) asparagine glycan. Residues 391 to 411 form a helical membrane-spanning segment; sequence ILALVFGLLFAVTSIAFLLQL. The Cytoplasmic segment spans residues 412–437; sequence RRQHRHRSGTKDRVSYSPAEMTETGA. Residue Tyr427 is modified to Phosphotyrosine.

The protein belongs to the alpha-carbonic anhydrase family. As to quaternary structure, forms oligomers linked by disulfide bonds. It depends on Zn(2+) as a cofactor. In terms of processing, asn-325 bears high-mannose type glycan structures.

It is found in the nucleus. The protein localises to the nucleolus. It localises to the cell membrane. The protein resides in the cell projection. Its subcellular location is the microvillus membrane. The catalysed reaction is hydrogencarbonate + H(+) = CO2 + H2O. Its activity is regulated as follows. Inhibited by acetazolamide. Functionally, catalyzes the interconversion between carbon dioxide and water and the dissociated ions of carbonic acid (i.e. bicarbonate and hydrogen ions). This Mus musculus (Mouse) protein is Carbonic anhydrase 9 (Ca9).